The following is a 293-amino-acid chain: Phosphoribosylaminoimidazole-succinocarboxamide synthase (293 aa).

This sequence belongs to the SAICAR synthetase family.

The enzyme catalyses 5-amino-1-(5-phospho-D-ribosyl)imidazole-4-carboxylate + L-aspartate + ATP = (2S)-2-[5-amino-1-(5-phospho-beta-D-ribosyl)imidazole-4-carboxamido]succinate + ADP + phosphate + 2 H(+). Its pathway is purine metabolism; IMP biosynthesis via de novo pathway; 5-amino-1-(5-phospho-D-ribosyl)imidazole-4-carboxamide from 5-amino-1-(5-phospho-D-ribosyl)imidazole-4-carboxylate: step 1/2. The sequence is that of Phosphoribosylaminoimidazole-succinocarboxamide synthase from Bordetella parapertussis (strain 12822 / ATCC BAA-587 / NCTC 13253).